Consider the following 108-residue polypeptide: MGVQVETISPGDGRTFPKRGQTCVVHYTGMLEDGKKFDSSRDRNKPFKFMLGKQEVIRGWEEGVAQMSVGQRAKLTISPDYAYGATGHPGIIPPHATLVFDVELLKLE.

The 89-residue stretch at 20 to 108 (GQTCVVHYTG…VFDVELLKLE (89 aa)) folds into the PPIase FKBP-type domain. At Lys53 the chain carries N6-acetyllysine; alternate. Lys53 bears the N6-succinyllysine; alternate mark.

This sequence belongs to the FKBP-type PPIase family. FKBP1 subfamily. As to quaternary structure, interacts with TGFBR1; prevents TGFBR1 phosphorylation by TGFBR2 and stabilizes it in the inactive conformation. Interacts with ACVR1B and SMAD7. Identified in a complex composed of RYR1, PDE4D, PKA, FKBP1A and protein phosphatase 1 (PP1). Interacts directly with RYR2 and RYR3. Interacts with GLMN; rapamycin and FK506 abolish the interaction with GLMN in a dose dependent manner. Interacts directly with RYR1.

It is found in the cytoplasm. It localises to the cytosol. Its subcellular location is the sarcoplasmic reticulum membrane. It catalyses the reaction [protein]-peptidylproline (omega=180) = [protein]-peptidylproline (omega=0). With respect to regulation, inhibited by both FK506 and rapamycin. Functionally, keeps in an inactive conformation TGFBR1, the TGF-beta type I serine/threonine kinase receptor, preventing TGF-beta receptor activation in absence of ligand. Recruits SMAD7 to ACVR1B which prevents the association of SMAD2 and SMAD3 with the activin receptor complex, thereby blocking the activin signal. May modulate the RYR1 calcium channel activity. PPIases accelerate the folding of proteins. It catalyzes the cis-trans isomerization of proline imidic peptide bonds in oligopeptides. The polypeptide is Peptidyl-prolyl cis-trans isomerase FKBP1A (FKBP1A) (Homo sapiens (Human)).